The primary structure comprises 156 residues: Small ribosomal subunit protein uS7 (156 aa).

The protein belongs to the universal ribosomal protein uS7 family. As to quaternary structure, part of the 30S ribosomal subunit. Contacts proteins S9 and S11.

Its function is as follows. One of the primary rRNA binding proteins, it binds directly to 16S rRNA where it nucleates assembly of the head domain of the 30S subunit. Is located at the subunit interface close to the decoding center, probably blocks exit of the E-site tRNA. This Roseobacter denitrificans (strain ATCC 33942 / OCh 114) (Erythrobacter sp. (strain OCh 114)) protein is Small ribosomal subunit protein uS7.